The sequence spans 502 residues: Hexokinase-4 (502 aa).

A helical transmembrane segment spans residues 4–24 (VLVMLTAAAAVVACSVATVMV). The Hexokinase domain maps to 35 to 491 (RRVVGLLKDL…SSIGSALLLA (457 aa)). The segment at 90-228 (NGSETGTYYA…GLDIRVAALV (139 aa)) is hexokinase small subdomain. Residues glycine 104 and serine 105 each coordinate ADP. Positions 194, 195, 229, and 230 each coordinate D-glucose. Residues 229–480 (NDTVGALSFG…QHVVVKAMED (252 aa)) are hexokinase large subdomain. ADP is bound at residue threonine 253. Positions 256, 284, and 315 each coordinate D-glucose. Residue glycine 445 participates in ADP binding.

It belongs to the hexokinase family.

It localises to the mitochondrion outer membrane. The catalysed reaction is a D-hexose + ATP = a D-hexose 6-phosphate + ADP + H(+). The enzyme catalyses D-fructose + ATP = D-fructose 6-phosphate + ADP + H(+). It catalyses the reaction D-glucose + ATP = D-glucose 6-phosphate + ADP + H(+). It functions in the pathway carbohydrate metabolism; hexose metabolism. It participates in carbohydrate degradation; glycolysis; D-glyceraldehyde 3-phosphate and glycerone phosphate from D-glucose: step 1/4. Fructose and glucose phosphorylating enzyme. May be involved in the phosphorylation of glucose during the export from mitochondrion to cytosol. The protein is Hexokinase-4 of Arabidopsis thaliana (Mouse-ear cress).